The sequence spans 661 residues: UvrABC system protein B (661 aa).

The region spanning 25–182 (AGLSSKKRSQ…NDLINLQYER (158 aa)) is the Helicase ATP-binding domain. 38 to 45 (GITGSGKT) serves as a coordination point for ATP. A Beta-hairpin motif is present at residues 91–114 (YYDYYQPEAYIARTDTFIEKDSSI). The Helicase C-terminal domain occupies 430–592 (QVEDLISEIQ…IIPKTINRAI (163 aa)). The UVR domain occupies 621–656 (KTHIDKLKKEMLKAASNLEFEQAVKLRDQLKTLEAA).

This sequence belongs to the UvrB family. As to quaternary structure, forms a heterotetramer with UvrA during the search for lesions. Interacts with UvrC in an incision complex.

The protein resides in the cytoplasm. Functionally, the UvrABC repair system catalyzes the recognition and processing of DNA lesions. A damage recognition complex composed of 2 UvrA and 2 UvrB subunits scans DNA for abnormalities. Upon binding of the UvrA(2)B(2) complex to a putative damaged site, the DNA wraps around one UvrB monomer. DNA wrap is dependent on ATP binding by UvrB and probably causes local melting of the DNA helix, facilitating insertion of UvrB beta-hairpin between the DNA strands. Then UvrB probes one DNA strand for the presence of a lesion. If a lesion is found the UvrA subunits dissociate and the UvrB-DNA preincision complex is formed. This complex is subsequently bound by UvrC and the second UvrB is released. If no lesion is found, the DNA wraps around the other UvrB subunit that will check the other stand for damage. The sequence is that of UvrABC system protein B from Rickettsia peacockii (strain Rustic).